A 100-amino-acid chain; its full sequence is NADH-quinone oxidoreductase subunit K (100 aa).

The next 3 helical transmembrane spans lie at 2-22, 29-49, and 63-83; these read ITLTHYLILSAILFSIALVGI, LMLFFATEIALNAVNIALAAF, and FFIIAIAASEVAVGLGLLIIW.

It belongs to the complex I subunit 4L family. As to quaternary structure, NDH-1 is composed of 14 different subunits. Subunits NuoA, H, J, K, L, M, N constitute the membrane sector of the complex.

The protein localises to the cell inner membrane. The enzyme catalyses a quinone + NADH + 5 H(+)(in) = a quinol + NAD(+) + 4 H(+)(out). In terms of biological role, NDH-1 shuttles electrons from NADH, via FMN and iron-sulfur (Fe-S) centers, to quinones in the respiratory chain. The immediate electron acceptor for the enzyme in this species is believed to be ubiquinone. Couples the redox reaction to proton translocation (for every two electrons transferred, four hydrogen ions are translocated across the cytoplasmic membrane), and thus conserves the redox energy in a proton gradient. This is NADH-quinone oxidoreductase subunit K from Nitratiruptor sp. (strain SB155-2).